The sequence spans 139 residues: Gas vesicle protein A (139 aa).

The disordered stretch occupies residues 113–139 (EKLGDMLTSDEPEPRKATRVRSRRADR). Over residues 129–139 (ATRVRSRRADR) the composition is skewed to basic residues.

It belongs to the gas vesicle GvpA family. The gas vesicle shell is 2 nm thick and consists of a single layer of this protein. It forms helical ribs nearly perpendicular to the long axis of the vesicle.

It is found in the gas vesicle shell. Its function is as follows. Gas vesicles are hollow, gas filled proteinaceous nanostructures found in some microorganisms. During planktonic growth they allow positioning of the organism at a favorable depth for light or nutrient acquisition. GvpA forms the protein shell. The protein is Gas vesicle protein A of Mycobacterium sp. (strain JLS).